The chain runs to 510 residues: Probable cytochrome P450 517A2 (510 aa).

Residues 1–21 (MRILIIIILIIIVFLVKDTIK) form a helical membrane-spanning segment. Residue cysteine 450 participates in heme binding.

It belongs to the cytochrome P450 family. It depends on heme as a cofactor.

The protein resides in the membrane. The chain is Probable cytochrome P450 517A2 (cyp517A2) from Dictyostelium discoideum (Social amoeba).